Reading from the N-terminus, the 88-residue chain is Small ribosomal subunit protein uS15 (88 aa).

The protein belongs to the universal ribosomal protein uS15 family. In terms of assembly, part of the 30S ribosomal subunit. Forms a bridge to the 50S subunit in the 70S ribosome, contacting the 23S rRNA.

Functionally, one of the primary rRNA binding proteins, it binds directly to 16S rRNA where it helps nucleate assembly of the platform of the 30S subunit by binding and bridging several RNA helices of the 16S rRNA. In terms of biological role, forms an intersubunit bridge (bridge B4) with the 23S rRNA of the 50S subunit in the ribosome. The polypeptide is Small ribosomal subunit protein uS15 (Thermoanaerobacter pseudethanolicus (strain ATCC 33223 / 39E) (Clostridium thermohydrosulfuricum)).